We begin with the raw amino-acid sequence, 1080 residues long: Protein transport protein SEC24 C (1080 aa).

Over residues 1–10 (MVAPVPPGAP) the composition is skewed to pro residues. Disordered stretches follow at residues 1 to 189 (MVAP…SGMI), 201 to 220 (GSGG…TTPQ), and 316 to 367 (TAMG…SDYV). Residues 12–43 (PNSQQNSGPPNFYPGSQGNSNALADNMQNLSL) are compositionally biased toward polar residues. Pro residues predominate over residues 45–70 (RPPPMMPGSGPRPPPPFGQSPQPFPQ). Composition is skewed to low complexity over residues 71–84 (QSPS…GPSP), 142–160 (PAAS…SVAA), and 178–189 (GSGMSMPPSGMI). Residues 340–356 (GSSSSPTVFETRQSNQA) show a composition bias toward polar residues. The Zn(2+) site is built by Cys-430, Cys-433, Cys-452, and Cys-455. The interval 430–455 (CSRCKGYINPFMKFIDQGRKFICNFC) is zinc finger-like.

The protein belongs to the SEC23/SEC24 family. SEC24 subfamily. In terms of assembly, component of the coat protein complex II (COPII), composed of at least five proteins: the Sec23/24 complex, the Sec13/31 complex and Sar1. Mainly expressed at low levels in pollen, leaves, roots and stems.

It is found in the cytoplasmic vesicle. The protein resides in the COPII-coated vesicle membrane. It localises to the endoplasmic reticulum membrane. The protein localises to the golgi apparatus membrane. Functionally, component of the coat protein complex II (COPII), that covers ER-derived vesicles involved in transport from the endoplasmic reticulum to the Golgi apparatus. COPII is composed of at least five proteins: the SEC23/24 complex, the SEC13/31 complex, and the protein SAR1. Acts in the cytoplasm to promote the transport of secretory, plasma membrane, and vacuolar proteins from the endoplasmic reticulum to the Golgi complex. The sequence is that of Protein transport protein SEC24 C from Arabidopsis thaliana (Mouse-ear cress).